Consider the following 247-residue polypeptide: tRNA uridine(34) hydroxylase (247 aa).

Positions 124–218 constitute a Rhodanese domain; the sequence is TKQDVIVIDT…YLEDTQNKNN (95 aa). Cysteine 178 serves as the catalytic Cysteine persulfide intermediate.

This sequence belongs to the TrhO family.

The enzyme catalyses uridine(34) in tRNA + AH2 + O2 = 5-hydroxyuridine(34) in tRNA + A + H2O. Its function is as follows. Catalyzes oxygen-dependent 5-hydroxyuridine (ho5U) modification at position 34 in tRNAs. This chain is tRNA uridine(34) hydroxylase, found in Rickettsia rickettsii (strain Iowa).